The sequence spans 342 residues: UDP-3-O-acylglucosamine N-acyltransferase (342 aa).

The active-site Proton acceptor is the His-253.

This sequence belongs to the transferase hexapeptide repeat family. LpxD subfamily. As to quaternary structure, homotrimer.

It carries out the reaction a UDP-3-O-[(3R)-3-hydroxyacyl]-alpha-D-glucosamine + a (3R)-hydroxyacyl-[ACP] = a UDP-2-N,3-O-bis[(3R)-3-hydroxyacyl]-alpha-D-glucosamine + holo-[ACP] + H(+). It participates in bacterial outer membrane biogenesis; LPS lipid A biosynthesis. Its function is as follows. Catalyzes the N-acylation of UDP-3-O-acylglucosamine using 3-hydroxyacyl-ACP as the acyl donor. Is involved in the biosynthesis of lipid A, a phosphorylated glycolipid that anchors the lipopolysaccharide to the outer membrane of the cell. In Rickettsia bellii (strain RML369-C), this protein is UDP-3-O-acylglucosamine N-acyltransferase.